We begin with the raw amino-acid sequence, 91 residues long: Ribonuclease P protein component 4 (91 aa).

Residues cysteine 55, cysteine 58, cysteine 78, and cysteine 81 each coordinate Zn(2+).

The protein belongs to the eukaryotic/archaeal RNase P protein component 4 family. In terms of assembly, consists of a catalytic RNA component and at least 4-5 protein subunits. Zn(2+) is required as a cofactor.

Its subcellular location is the cytoplasm. The enzyme catalyses Endonucleolytic cleavage of RNA, removing 5'-extranucleotides from tRNA precursor.. Its function is as follows. Part of ribonuclease P, a protein complex that generates mature tRNA molecules by cleaving their 5'-ends. The chain is Ribonuclease P protein component 4 from Thermoplasma acidophilum (strain ATCC 25905 / DSM 1728 / JCM 9062 / NBRC 15155 / AMRC-C165).